A 55-amino-acid polypeptide reads, in one-letter code: Large ribosomal subunit protein bL33 (55 aa).

The protein belongs to the bacterial ribosomal protein bL33 family.

The protein is Large ribosomal subunit protein bL33 of Roseobacter denitrificans (strain ATCC 33942 / OCh 114) (Erythrobacter sp. (strain OCh 114)).